Here is a 291-residue protein sequence, read N- to C-terminus: uncharacterized protein (291 aa).

A run of 6 helical transmembrane segments spans residues 13 to 33, 40 to 60, 81 to 101, 128 to 148, 158 to 178, and 220 to 240; these read FDLFFAAIACICGILKVMEMG, LGTVSKNGMAVLAVLVALGFL, GFLNPCVILSVIEFFMMLICI, FGLFGAIFMPYIFAECIRLLL, VILGILVLGCLAMAGLAYLEY, and GNVWMYLAMFASFTLVLILLA. Asn249 carries N-linked (GlcNAc...) asparagine glycosylation. The tract at residues 269–291 is disordered; that stretch reads MASEDPPKDPLPRQEGGGGDTIA.

It localises to the membrane. This is an uncharacterized protein from Encephalitozoon cuniculi (strain GB-M1) (Microsporidian parasite).